Here is a 414-residue protein sequence, read N- to C-terminus: Calcium/calmodulin-dependent protein kinase cmkA (414 aa).

Residues 23–278 enclose the Protein kinase domain; that stretch reads YRFGRTLGAG…SEEALKHPWL (256 aa). Residues 29-37 and lysine 50 each bind ATP; that span reads LGAGTYGIV. Aspartate 142 functions as the Proton acceptor in the catalytic mechanism. The interval 278 to 314 is autoinhibitory domain; it reads LKGESASDRDLLPEIRAYIARSRLKRGIEIIKLANRI. Residues 293 to 315 are calmodulin-binding; the sequence is RAYIARSRLKRGIEIIKLANRIE. Disordered stretches follow at residues 320–375 and 394–414; these read QEED…KRSL and EMKE…RAHS. The segment covering 351–364 has biased composition (polar residues); it reads STENSNTHPASTGN.

This sequence belongs to the protein kinase superfamily. CAMK Ser/Thr protein kinase family. CaMK subfamily. As to quaternary structure, monomer. Post-translationally, autophosphorylated in a calcium/calmodulin-dependent manner.

It carries out the reaction L-seryl-[protein] + ATP = O-phospho-L-seryl-[protein] + ADP + H(+). It catalyses the reaction L-threonyl-[protein] + ATP = O-phospho-L-threonyl-[protein] + ADP + H(+). Activated by Ca(2+)/calmodulin. Binding of calmodulin may relieve intrasteric autoinhibition. In terms of biological role, calcium/calmodulin-dependent protein kinase. Required in nuclear division cycle for progression from G2 to mitosis. Required for hyphal growth. This Emericella nidulans (strain FGSC A4 / ATCC 38163 / CBS 112.46 / NRRL 194 / M139) (Aspergillus nidulans) protein is Calcium/calmodulin-dependent protein kinase cmkA (cmkA).